The chain runs to 193 residues: 7-methyl-GTP pyrophosphatase (193 aa).

D69 functions as the Proton acceptor in the catalytic mechanism.

Belongs to the Maf family. YceF subfamily. Requires a divalent metal cation as cofactor.

It localises to the cytoplasm. The enzyme catalyses N(7)-methyl-GTP + H2O = N(7)-methyl-GMP + diphosphate + H(+). Its function is as follows. Nucleoside triphosphate pyrophosphatase that hydrolyzes 7-methyl-GTP (m(7)GTP). May have a dual role in cell division arrest and in preventing the incorporation of modified nucleotides into cellular nucleic acids. The polypeptide is 7-methyl-GTP pyrophosphatase (Chromohalobacter salexigens (strain ATCC BAA-138 / DSM 3043 / CIP 106854 / NCIMB 13768 / 1H11)).